We begin with the raw amino-acid sequence, 423 residues long: Glycine amidinotransferase, mitochondrial (423 aa).

Residues 1 to 43 (MLRVRCLRGGSRGAEAVHYIGSRLGGSLTGWVQRTFQSTQAAT) constitute a mitochondrion transit peptide. Phosphoserine is present on residues Ser-46 and Ser-49. Asp-170 contributes to the arginine binding site. Catalysis depends on residues Asp-254 and His-303. Arginine is bound by residues Asp-305, Arg-322, Ser-354, and Ser-355. Lys-385 bears the N6-acetyllysine mark. The active-site Amidino-cysteine intermediate is Cys-407.

The protein belongs to the amidinotransferase family. In terms of assembly, homodimer. Highly expressed in the kidney and pancreas, especially in the proximal tubules of the kidney, and alpha cells of the pancreatic islets (at protein level). Moderately expressed in liver hepatocytes (at protein level). Expressed in the kidney, pancreas, liver, colon, ileum, jejunum, heart and skeletal muscle. In reproductive tissues, expressed in the testis, epididymis, ovary, oviduct and uterus. Expressed throughout the brain in neurons, astrocytes and oligodendrocytes. In 12.5 dpc embryos, it is expressed in the middle part of the somites, hepatic primordium and wall of the dorsal aorta. Expressed in 15.5 dpc embryos in isolated cells throughout the central nervous system, skeletal muscles, gonad primordia, caudal somites, liver and pancreas, but not in the choroid plexus, root ganglia or kidney. Expressed in skeletal muscle, kidney, pancreas, central nervous system, liver and intestine epithelial cells, but not in epidermis, dermis, olfactory epithelium, trachea, lung, stomach or heart in 18.5 dpc embryos.

The protein resides in the mitochondrion inner membrane. It carries out the reaction L-arginine + glycine = guanidinoacetate + L-ornithine. It catalyses the reaction 4-aminobutanoate + L-arginine = 4-guanidinobutanoate + L-ornithine. The enzyme catalyses beta-alanine + L-arginine = 3-guanidinopropanoate + L-ornithine. The catalysed reaction is taurine + L-arginine = taurocyamine + L-ornithine. It participates in amine and polyamine biosynthesis; creatine biosynthesis; creatine from L-arginine and glycine: step 1/2. In terms of biological role, transamidinase that catalyzes the transfer of the amidino group of L-arginine onto the amino moiety of acceptor metabolites such as glycine, beta-alanine, gamma-aminobutyric acid (GABA) and taurine yielding the corresponding guanidine derivatives. Catalyzes the rate-limiting step of creatine biosynthesis, namely the transfer of the amidino group from L-arginine to glycine to generate guanidinoacetate, which is then methylated by GAMT to form creatine. Provides creatine as a source for ATP generation in tissues with high energy demands, in particular skeletal muscle, heart and brain. This Rattus norvegicus (Rat) protein is Glycine amidinotransferase, mitochondrial (Gatm).